We begin with the raw amino-acid sequence, 332 residues long: Protein phosphatase PTC7 homolog fig (332 aa).

The PPM-type phosphatase domain occupies 70–325 (KPCSPRERAN…DDITLILASV (256 aa)). Residues aspartate 102, glycine 103, and aspartate 247 each coordinate Mn(2+).

It belongs to the PP2C family. The cofactor is Mg(2+). Mn(2+) serves as cofactor.

The enzyme catalyses O-phospho-L-seryl-[protein] + H2O = L-seryl-[protein] + phosphate. It catalyses the reaction O-phospho-L-threonyl-[protein] + H2O = L-threonyl-[protein] + phosphate. The sequence is that of Protein phosphatase PTC7 homolog fig from Drosophila ananassae (Fruit fly).